The sequence spans 701 residues: Translation initiation factor IF-2 (701 aa).

The segment covering 48–62 (KIYKPEKAEQSEKSQ) has biased composition (basic and acidic residues). Residues 48–123 (KIYKPEKAEQ…EPKEMPSKIT (76 aa)) form a disordered region. Composition is skewed to low complexity over residues 63–89 (QKNT…NNKP) and 97–109 (NNKN…NNKQ). A compositionally biased stretch (basic and acidic residues) spans 110-119 (PKQEEPKEMP). The tr-type G domain maps to 203 to 372 (ERPAVVTIMG…VLTSEVQELK (170 aa)). Residues 212–219 (GHVDHGKT) form a G1 region. GTP is bound at residue 212-219 (GHVDHGKT). The G2 stretch occupies residues 237–241 (GITQH). The segment at 258–261 (DTPG) is G3. GTP contacts are provided by residues 258–262 (DTPGH) and 312–315 (NKID). Residues 312–315 (NKID) form a G4 region. The segment at 348-350 (SAL) is G5.

It belongs to the TRAFAC class translation factor GTPase superfamily. Classic translation factor GTPase family. IF-2 subfamily.

It is found in the cytoplasm. One of the essential components for the initiation of protein synthesis. Protects formylmethionyl-tRNA from spontaneous hydrolysis and promotes its binding to the 30S ribosomal subunits. Also involved in the hydrolysis of GTP during the formation of the 70S ribosomal complex. In Staphylococcus saprophyticus subsp. saprophyticus (strain ATCC 15305 / DSM 20229 / NCIMB 8711 / NCTC 7292 / S-41), this protein is Translation initiation factor IF-2.